A 554-amino-acid polypeptide reads, in one-letter code: Hydroxylamine reductase (554 aa).

Residues cysteine 3, cysteine 6, cysteine 18, and cysteine 25 each contribute to the [2Fe-2S] cluster site. Histidine 252, glutamate 276, cysteine 320, cysteine 408, cysteine 436, cysteine 461, glutamate 495, and lysine 497 together coordinate hybrid [4Fe-2O-2S] cluster. The residue at position 408 (cysteine 408) is a Cysteine persulfide.

The protein belongs to the HCP family. The cofactor is [2Fe-2S] cluster. Hybrid [4Fe-2O-2S] cluster is required as a cofactor.

It is found in the cytoplasm. The catalysed reaction is A + NH4(+) + H2O = hydroxylamine + AH2 + H(+). Functionally, catalyzes the reduction of hydroxylamine to form NH(3) and H(2)O. The protein is Hydroxylamine reductase of Shewanella baltica (strain OS195).